The sequence spans 87 residues: Small ribosomal subunit protein bS20 (87 aa).

The protein belongs to the bacterial ribosomal protein bS20 family.

Binds directly to 16S ribosomal RNA. This Clostridium beijerinckii (strain ATCC 51743 / NCIMB 8052) (Clostridium acetobutylicum) protein is Small ribosomal subunit protein bS20.